Consider the following 705-residue polypeptide: Polyribonucleotide nucleotidyltransferase (705 aa).

The Mg(2+) site is built by Asp-487 and Asp-493. The KH domain occupies 554–613 (PKILTMTINPDKIRDVIGPSGKQINKIIEETGVKIDIEQDGTIFISSTDESGNQKAKKII). The region spanning 623–691 (GQLYLGKVKR…KQGRVNLSRK (69 aa)) is the S1 motif domain.

Belongs to the polyribonucleotide nucleotidyltransferase family. Homodimer. Component of a possible RNA degradosome complex composed of rny, rnjA, rnjB, pnp, pfkA and eno (although rnjA and rnjB's presence is unclear). RNA helicase CshA may also be a member of this complex. Mg(2+) is required as a cofactor.

It localises to the cytoplasm. The enzyme catalyses RNA(n+1) + phosphate = RNA(n) + a ribonucleoside 5'-diphosphate. Functionally, involved in mRNA degradation. Catalyzes the phosphorolysis of single-stranded polyribonucleotides processively in the 3'- to 5'-direction. Necessary for competence development in Bacillus subtilis. May be necessary for modification of the srfA transcript (stabilization or translation activation). Involved in processing precursor type I toxin-antitoxin RNAs antitoxin SR4 and SR5 RNAs to their mature forms. This is Polyribonucleotide nucleotidyltransferase from Bacillus subtilis (strain 168).